The primary structure comprises 413 residues: Floricaula/leafy homolog 1 (413 aa).

Disordered regions lie at residues 154 to 177 (EGLS…GGTT) and 191 to 239 (QRRR…RQRE). Basic and acidic residues predominate over residues 201–210 (GRERRGRASA). Over residues 211–225 (EEDEETEEGQEDEWN) the composition is skewed to acidic residues. DNA-binding regions lie at residues 238 to 242 (REHPF), 307 to 314 (NKPKMRHY), and 378 to 381 (YVPT).

The protein belongs to the FLO/LFY family. Expressed in floral meristems and in indeterminate vegetative meristems.

The protein resides in the nucleus. Its function is as follows. Probable transcription factor that act to specify determinacy in the progenitor cells for both flowers and leaves. The protein is Floricaula/leafy homolog 1 (FL1) of Nicotiana tabacum (Common tobacco).